Reading from the N-terminus, the 850-residue chain is Lon protease (850 aa).

The Lon N-terminal domain maps to 38 to 232 (LPVLPLRDVV…LLVGLVDGEI (195 aa)). 384-391 (GPPGVGKT) is a binding site for ATP. Residues 634–815 (ENEIGLVTGL…DEVLDLALER (182 aa)) enclose the Lon proteolytic domain. Active-site residues include S721 and K764. Residues 819-850 (PKKAGKEKARKTAPRVAVRGKSRSTPGTRVKH) form a disordered region. Basic residues predominate over residues 821-840 (KAGKEKARKTAPRVAVRGKS). Over residues 841–850 (RSTPGTRVKH) the composition is skewed to polar residues.

It belongs to the peptidase S16 family. Homohexamer. Organized in a ring with a central cavity.

It is found in the cytoplasm. The enzyme catalyses Hydrolysis of proteins in presence of ATP.. Its function is as follows. ATP-dependent serine protease that mediates the selective degradation of mutant and abnormal proteins as well as certain short-lived regulatory proteins. Required for cellular homeostasis and for survival from DNA damage and developmental changes induced by stress. Degrades polypeptides processively to yield small peptide fragments that are 5 to 10 amino acids long. Binds to DNA in a double-stranded, site-specific manner. The sequence is that of Lon protease from Xanthomonas oryzae pv. oryzae (strain KACC10331 / KXO85).